Here is a 352-residue protein sequence, read N- to C-terminus: Schlafen-like protein 4 (352 aa).

The tract at residues 87–235 (FEYQSNFSEV…SDKVYQISSG (149 aa)) is SLFN-like fold. The chain crosses the membrane as a helical span at residues 326–343 (IQNIGWIFFGTALSCCIY).

Belongs to the Schlafen family. As to quaternary structure, component of the PUCH (precursor of 21U RNA 5'-end cleavage holoenzyme) complex; consisting of tofu-1, tofu-2 and either slfl-3 or slfl-4.

It is found in the membrane. Component of the trimeric PUCH (precursor of 21U RNA 5'-end cleavage holoenzyme) complex, that acts as an endoribonuclease processing the 5'-end of precursor Piwi-interacting RNAs (piRNAs). The PUCH complex consists of tofu-1, tofu-2 and either slfl-3 or slfl-4, where tofu-2 exhibits endoribonuclease activity. PUCH-mediated processing strictly requires a 7-methyl-G cap (m7 G-cap) and an uracil at position three (U3). PUCH also exhibits a strict bias for piRNA precursors with an A or G at position 1. Mature piRNA production is enhanced by the interaction of PUCH with the PETISCO complex, which is stabilizing piRNA precursors and allows their processing by PUCH. This chain is Schlafen-like protein 4, found in Caenorhabditis elegans.